The sequence spans 884 residues: Exocyst complex component 2 (884 aa).

Over residues 1–11 (MEENAQARERL) the composition is skewed to basic and acidic residues. Positions 1-27 (MEENAQARERLPPTVTGLSPTEGVPGT) are disordered. Residues 13–98 (PTVTGLSPTE…GSSNVKFRVF (86 aa)) enclose the IPT/TIG domain. Coiled-coil stretches lie at residues 178-206 (ADAT…SEEM) and 846-874 (NQRL…AENL).

This sequence belongs to the SEC5 family. In terms of assembly, the exocyst complex is composed of sec-3/exoc1, sec-5/exoc2, sec-6/exoc3, sec-8/exoc4, sec-10/exoc5, sec-15/exoc6, exo-70/exoc7 and exo-84/exoc8.

In terms of biological role, component of the exocyst complex involved in the docking of exocytic vesicles with fusion sites on the plasma membrane. The protein is Exocyst complex component 2 (sec-5) of Caenorhabditis elegans.